We begin with the raw amino-acid sequence, 131 residues long: Holo-[acyl-carrier-protein] synthase (131 aa).

2 residues coordinate Mg(2+): aspartate 8 and glutamate 58.

Belongs to the P-Pant transferase superfamily. AcpS family. Requires Mg(2+) as cofactor.

It is found in the cytoplasm. The catalysed reaction is apo-[ACP] + CoA = holo-[ACP] + adenosine 3',5'-bisphosphate + H(+). Its function is as follows. Transfers the 4'-phosphopantetheine moiety from coenzyme A to a Ser of acyl-carrier-protein. This chain is Holo-[acyl-carrier-protein] synthase, found in Oenococcus oeni (strain ATCC BAA-331 / PSU-1).